We begin with the raw amino-acid sequence, 194 residues long: Protein GrpE (194 aa).

The interval 1-53 (MVENEKTSVEETEEKAETEDEMLTEDPSNEDSDEANEEGNELSEEEKRIAELE) is disordered. Residues 10–44 (EETEEKAETEDEMLTEDPSNEDSDEANEEGNELSE) show a composition bias toward acidic residues.

This sequence belongs to the GrpE family. As to quaternary structure, homodimer.

The protein localises to the cytoplasm. Functionally, participates actively in the response to hyperosmotic and heat shock by preventing the aggregation of stress-denatured proteins, in association with DnaK and GrpE. It is the nucleotide exchange factor for DnaK and may function as a thermosensor. Unfolded proteins bind initially to DnaJ; upon interaction with the DnaJ-bound protein, DnaK hydrolyzes its bound ATP, resulting in the formation of a stable complex. GrpE releases ADP from DnaK; ATP binding to DnaK triggers the release of the substrate protein, thus completing the reaction cycle. Several rounds of ATP-dependent interactions between DnaJ, DnaK and GrpE are required for fully efficient folding. This is Protein GrpE from Halalkalibacterium halodurans (strain ATCC BAA-125 / DSM 18197 / FERM 7344 / JCM 9153 / C-125) (Bacillus halodurans).